A 279-amino-acid polypeptide reads, in one-letter code: MFSSSQFEPNSGFSGGGFMSSQPSQAYESSSSTAKNRDFQGLVPVTVKQITECFQSSGEKSGLVINGISLTNVSLVGLVCDKDESKVTEVRFTLDDGTGRIDCKRWVSETFDAREMESVRDGTYVRLSGHLKTFQGKTQLLVFSVRPIMDFNEVTFHYIECIHFYSQNSESQRQQVGDVTQSVNTTFQGGSNTNQATLLNPVVSSQNNDGNGRKNLDDMILDYLKQPACTARQQGIHIDEIAQQLKIPKNKLEGVVQSLEGDGLIYSTIDEYHFKHVEL.

The disordered stretch occupies residues methionine 1–threonine 33. Over residues methionine 19–serine 32 the composition is skewed to low complexity. The segment at residues valine 73 to isoleucine 148 is a DNA-binding region (OB).

This sequence belongs to the replication factor A protein 2 family. In terms of assembly, heterotrimer of RPA1, RPA2 and RPA3 (canonical replication protein A complex). Interacts with ROS1. Binds to ASE1/At3g02920, PDX2, At5g62350, RPA1A/At2g06510, ARF1/At1g10630, At4g18590 and At3g52630. Phosphorylated in a cell-cycle-dependent manner (from the S phase until mitosis). In response to DNA damage, recruited to DNA-repair nuclear foci, as a hypophosphorylated form. Strongly expressed in shoot and root meristems. Present in seedlings, roots, leaves, siliques and flowers.

Its subcellular location is the nucleus. Component of the replication protein A complex (RPA) required for DNA recombination, repair and replication. The activity of RPA is mediated by single-stranded DNA binding and protein interactions. Required fo cell division in meristems. Involved in the maintenance of transcriptional epigenetic gene silencing (TGS) at specific loci (including some transposons) by regulating histone H3 acetylation, 'Lys-4' and 'Lys-9' methylation. The protein is Replication protein A 32 kDa subunit A (RPA2A) of Arabidopsis thaliana (Mouse-ear cress).